The primary structure comprises 727 residues: Elongation factor 2 (727 aa).

The tr-type G domain maps to 19-260; that stretch reads DQIRNMGICA…MAIKHLPNPL (242 aa). GTP-binding positions include 28–35, 94–98, and 148–151; these read AHIDHGKT, DTPGH, and NKVD. Position 603 is a diphthamide (H603).

This sequence belongs to the TRAFAC class translation factor GTPase superfamily. Classic translation factor GTPase family. EF-G/EF-2 subfamily.

Its subcellular location is the cytoplasm. In terms of biological role, catalyzes the GTP-dependent ribosomal translocation step during translation elongation. During this step, the ribosome changes from the pre-translocational (PRE) to the post-translocational (POST) state as the newly formed A-site-bound peptidyl-tRNA and P-site-bound deacylated tRNA move to the P and E sites, respectively. Catalyzes the coordinated movement of the two tRNA molecules, the mRNA and conformational changes in the ribosome. The sequence is that of Elongation factor 2 from Methanococcus maripaludis (strain C7 / ATCC BAA-1331).